The sequence spans 201 residues: MDEMDNVIRSLEQEYRLILLLNHRNKNQHRAASWYGSFNEMKRNCGQIITLFSSRRLQAKRLKDVEWVKLHRLLQRALFRQLKRWYWQFNGVIALGQFVTLGCTLVTLLANVRALYMRLWEINETEFIRCGCLIKNLPRTKAKSVVNDVEELGEIIDEDIGNNVQENELVITSIPKPLTENCKKKKKRKKKNKSAIDGIFG.

Residues 86 to 108 (YWQFNGVIALGQFVTLGCTLVTL) traverse the membrane as a helical segment.

As to quaternary structure, component of RNase MRP complex which consists of an RNA moiety and at least 10 protein subunits including POP1, POP3, POP4, POP5, POP6, POP7, POP8, RMP1, RPP1 and SNM1, many of which are shared with the RNase P complex.

The protein localises to the membrane. The protein resides in the cytoplasm. It is found in the nucleus. Functions as part of ribonuclease MRP (RNase MRP), which is involved in rRNA processing in mitochondria. In Saccharomyces cerevisiae (strain ATCC 204508 / S288c) (Baker's yeast), this protein is Ribonuclease MRP protein subunit RMP1.